The following is a 207-amino-acid chain: Holliday junction branch migration complex subunit RuvA (207 aa).

A domain I region spans residues 1–65 (MIGRIRGVIL…EDAQLLYGFN (65 aa)). The tract at residues 66–143 (QKQERALFRE…KGLNGDLFEQ (78 aa)) is domain II. A flexible linker region spans residues 144–158 (NGDIELPASASSKAP). The segment at 159 to 207 (SAADIEAEASAALIALGYKPQEAAKMISRVATAGADSETLIKEALRAAI) is domain III.

Belongs to the RuvA family. Homotetramer. Forms an RuvA(8)-RuvB(12)-Holliday junction (HJ) complex. HJ DNA is sandwiched between 2 RuvA tetramers; dsDNA enters through RuvA and exits via RuvB. An RuvB hexamer assembles on each DNA strand where it exits the tetramer. Each RuvB hexamer is contacted by two RuvA subunits (via domain III) on 2 adjacent RuvB subunits; this complex drives branch migration. In the full resolvosome a probable DNA-RuvA(4)-RuvB(12)-RuvC(2) complex forms which resolves the HJ.

The protein localises to the cytoplasm. In terms of biological role, the RuvA-RuvB-RuvC complex processes Holliday junction (HJ) DNA during genetic recombination and DNA repair, while the RuvA-RuvB complex plays an important role in the rescue of blocked DNA replication forks via replication fork reversal (RFR). RuvA specifically binds to HJ cruciform DNA, conferring on it an open structure. The RuvB hexamer acts as an ATP-dependent pump, pulling dsDNA into and through the RuvAB complex. HJ branch migration allows RuvC to scan DNA until it finds its consensus sequence, where it cleaves and resolves the cruciform DNA. The sequence is that of Holliday junction branch migration complex subunit RuvA from Proteus mirabilis (strain HI4320).